Reading from the N-terminus, the 392-residue chain is Tryptophan synthase beta chain (392 aa).

K84 bears the N6-(pyridoxal phosphate)lysine mark.

This sequence belongs to the TrpB family. Tetramer of two alpha and two beta chains. It depends on pyridoxal 5'-phosphate as a cofactor.

It carries out the reaction (1S,2R)-1-C-(indol-3-yl)glycerol 3-phosphate + L-serine = D-glyceraldehyde 3-phosphate + L-tryptophan + H2O. Its pathway is amino-acid biosynthesis; L-tryptophan biosynthesis; L-tryptophan from chorismate: step 5/5. Functionally, the beta subunit is responsible for the synthesis of L-tryptophan from indole and L-serine. In Chlamydia trachomatis serovar D (strain ATCC VR-885 / DSM 19411 / UW-3/Cx), this protein is Tryptophan synthase beta chain (trpB).